Reading from the N-terminus, the 214-residue chain is Alkaline phosphatase-like protein (214 aa).

4 helical membrane passes run 3–23, 48–68, 141–161, and 177–197; these read EIIIQVMNQFGYFGVAFLIMI, LGIIGMIIAATIGSVLGALIL, FLILTTLGTLIWNIVLVSLGA, and YSSVVVAILGVIFILGLLLFV.

This sequence belongs to the DedA family.

It localises to the cell membrane. This is Alkaline phosphatase-like protein (apl) from Lactococcus lactis subsp. cremoris (strain MG1363).